A 155-amino-acid polypeptide reads, in one-letter code: 6,7-dimethyl-8-ribityllumazine synthase (155 aa).

Residues W22, S56–E58, and A80–I82 each bind 5-amino-6-(D-ribitylamino)uracil. A85 to T86 is a (2S)-2-hydroxy-3-oxobutyl phosphate binding site. H88 serves as the catalytic Proton donor. F113 contacts 5-amino-6-(D-ribitylamino)uracil. R127 lines the (2S)-2-hydroxy-3-oxobutyl phosphate pocket.

It belongs to the DMRL synthase family.

The catalysed reaction is (2S)-2-hydroxy-3-oxobutyl phosphate + 5-amino-6-(D-ribitylamino)uracil = 6,7-dimethyl-8-(1-D-ribityl)lumazine + phosphate + 2 H2O + H(+). Its pathway is cofactor biosynthesis; riboflavin biosynthesis; riboflavin from 2-hydroxy-3-oxobutyl phosphate and 5-amino-6-(D-ribitylamino)uracil: step 1/2. Its function is as follows. Catalyzes the formation of 6,7-dimethyl-8-ribityllumazine by condensation of 5-amino-6-(D-ribitylamino)uracil with 3,4-dihydroxy-2-butanone 4-phosphate. This is the penultimate step in the biosynthesis of riboflavin. The polypeptide is 6,7-dimethyl-8-ribityllumazine synthase (Chloroflexus aurantiacus (strain ATCC 29364 / DSM 637 / Y-400-fl)).